The primary structure comprises 404 residues: G1/S-specific cyclin-E2 (404 aa).

A disordered region spans residues 1–45 (MSRRSSRLQAKQQPQASQTDSPQEAQIIQAKKRKTAQDVKKRKEE). Polar residues predominate over residues 7–26 (RLQAKQQPQASQTDSPQEAQ). Ser21 is subject to Phosphoserine. The segment covering 35–45 (TAQDVKKRKEE) has biased composition (basic and acidic residues). N6-lactoyllysine is present on Lys348. Ser383 is subject to Phosphoserine. The residue at position 392 (Thr392) is a Phosphothreonine.

The protein belongs to the cyclin family. Cyclin E subfamily. Interacts with the CDK2 (in vivo) and CDK3 (in vitro) protein kinases to form a serine/threonine kinase holoenzyme complex. The cyclin subunit imparts substrate specificity to the complex. In terms of processing, phosphorylation by CDK2 triggers its release from CDK2 and degradation via the ubiquitin proteasome pathway. Post-translationally, lactylated at Lys-348. Delactylated by SIRT3.

It is found in the nucleus. Essential for the control of the cell cycle at the late G1 and early S phase. The sequence is that of G1/S-specific cyclin-E2 (CCNE2) from Bos taurus (Bovine).